Reading from the N-terminus, the 133-residue chain is ATP synthase epsilon chain (133 aa).

It belongs to the ATPase epsilon chain family. As to quaternary structure, F-type ATPases have 2 components, CF(1) - the catalytic core - and CF(0) - the membrane proton channel. CF(1) has five subunits: alpha(3), beta(3), gamma(1), delta(1), epsilon(1). CF(0) has three main subunits: a, b and c.

The protein localises to the cell membrane. Its function is as follows. Produces ATP from ADP in the presence of a proton gradient across the membrane. The chain is ATP synthase epsilon chain from Bacillus anthracis (strain A0248).